Reading from the N-terminus, the 716-residue chain is Putative mannosyltransferase YkcB (716 aa).

8 helical membrane passes run 8–28 (LDIV…YNIW), 44–64 (MMQS…FITV), 87–107 (SVIL…YLLI), 118–135 (IASF…VART), 137–157 (NVDA…FKAI), 159–179 (KGKL…FNTK), 180–200 (MLQA…AANA), and 206–226 (IVSL…WPLI). The tract at residues 260–363 (TGQNSGGGQG…GSGMFGTGTP (104 aa)) is disordered. Residues 278-289 (EMSSSDNTQAPP) are compositionally biased toward polar residues. Low complexity predominate over residues 290-307 (NQSSSNSSSSDGKSSNGN). Residues 318–347 (PSGGQGGPPSGGDGGQGGPGGDGGKGGTGT) show a composition bias toward gly residues. The next 6 membrane-spanning stretches (helical) occupy residues 376–396 (QISW…IAGA), 409–429 (TVFW…AEFF), 433–453 (YLIM…VALV), 462–482 (WKAW…LFIL), 491–511 (VGWS…LLLF), and 518–538 (FSYY…MYWA). Residues 664–716 (VASEKWQSSSDQKTENTDSADTSSSKASGENGKMGGPGGMNQSATLYELHADE) form a disordered region. Positions 680 to 694 (TDSADTSSSKASGEN) are enriched in low complexity.

Belongs to the glycosyltransferase 39 family.

Its subcellular location is the cell membrane. This chain is Putative mannosyltransferase YkcB (ykcB), found in Bacillus subtilis (strain 168).